A 275-amino-acid polypeptide reads, in one-letter code: Protein FAM210A (275 aa).

The disordered stretch occupies residues 68–108 (SSQPADTPRKVPEEREPLTSATEVPKQSPVESDASDPDPLQ). Over residues 74–84 (TPRKVPEEREP) the composition is skewed to basic and acidic residues. The 113-residue stretch at 109–221 (DKSISLVQRF…GYMSTPPPVK (113 aa)) folds into the DUF1279 domain. Residues 128-148 (VMIPVHLVTSTVWFGSFYYAA) traverse the membrane as a helical segment. Positions 221–271 (KEYLQDRMEETKDKITEKMEETKDKITEKMEETKDKITEKIQETKDKVSFK) form a coiled coil.

It belongs to the FAM210 family. Interacts with ATAD3A.

It is found in the membrane. The protein resides in the mitochondrion. Its subcellular location is the cytoplasm. May play a role in the structure and strength of both muscle and bone. The chain is Protein FAM210A (FAM210A) from Gallus gallus (Chicken).